Reading from the N-terminus, the 644-residue chain is N-acetylgalactosaminyltransferase 4 (644 aa).

Over 1 to 13 (MAIKKRYVKRLLR) the chain is Cytoplasmic. A helical; Signal-anchor for type II membrane protein transmembrane segment spans residues 14-34 (KVVLLLVVIVTVSLVTTLVVE). Residues 35 to 644 (RRMKNAAELT…MLDTFYDGLK (610 aa)) lie on the Lumenal side of the membrane. Asn-157 and Asn-179 each carry an N-linked (GlcNAc...) asparagine glycan. The interval 177-288 (LPNISVIFIF…YNWLPPLIEP (112 aa)) is catalytic subdomain A. The substrate site is built by Asp-218 and Arg-249. Asp-272 contributes to the Mn(2+) binding site. Ser-273 is a substrate binding site. Position 274 (His-274) interacts with Mn(2+). The tract at residues 345-407 (PYRSPVMMGG…PCSRVAHIFR (63 aa)) is catalytic subdomain B. Trp-376 provides a ligand contact to substrate. His-404 serves as a coordination point for Mn(2+). Arg-407 is a substrate binding site. One can recognise a Ricin B-type lectin domain in the interval 496–629 (AAGIIQNVAN…GNDRQRWEFG (134 aa)). Residues Cys-509 and Cys-526 are joined by a disulfide bond. 2 N-linked (GlcNAc...) asparagine glycosylation sites follow: Asn-529 and Asn-565. 2 disulfides stabilise this stretch: Cys-556–Cys-573 and Cys-600–Cys-617. N-linked (GlcNAc...) asparagine glycosylation is present at Asn-632.

Belongs to the glycosyltransferase 2 family. GalNAc-T subfamily. It depends on Mn(2+) as a cofactor. Expressed in developing oocytes and egg chambers. During embryonic stages 9-11, expressed in the primordium of the foregut, midgut and hindgut. During embryonic stages 12-13, shows specific expression in the proventriculus that continues until the end of embryogenesis. In third instar larvae, ubiquitously expressed in wing, eye-antennal, leg and haltere imaginal disks.

It localises to the golgi apparatus membrane. It catalyses the reaction L-seryl-[protein] + UDP-N-acetyl-alpha-D-galactosamine = a 3-O-[N-acetyl-alpha-D-galactosaminyl]-L-seryl-[protein] + UDP + H(+). The enzyme catalyses L-threonyl-[protein] + UDP-N-acetyl-alpha-D-galactosamine = a 3-O-[N-acetyl-alpha-D-galactosaminyl]-L-threonyl-[protein] + UDP + H(+). Its pathway is protein modification; protein glycosylation. Functionally, glycopeptide transferase involved in O-linked oligosaccharide biosynthesis, which catalyzes the transfer of an N-acetyl-D-galactosamine residue to an already glycosylated peptide. In contrast to other proteins of the family, it does not act as a peptide transferase that transfers GalNAc onto serine or threonine residue on the protein receptor, but instead requires the prior addition of a GalNAc on a peptide before adding additional GalNAc moieties. Some peptide transferase activity is however not excluded, considering that its appropriate peptide substrate may remain unidentified. Prefers the diglycosylated Muc5AC-3/13 as substrate. The sequence is that of N-acetylgalactosaminyltransferase 4 from Drosophila melanogaster (Fruit fly).